We begin with the raw amino-acid sequence, 164 residues long: ATP synthase subunit b 1 (164 aa).

The helical transmembrane segment at 4–24 (MELAELWVAVAFFVFVGILLY) threads the bilayer.

This sequence belongs to the ATPase B chain family. In terms of assembly, F-type ATPases have 2 components, F(1) - the catalytic core - and F(0) - the membrane proton channel. F(1) has five subunits: alpha(3), beta(3), gamma(1), delta(1), epsilon(1). F(0) has three main subunits: a(1), b(2) and c(10-14). The alpha and beta chains form an alternating ring which encloses part of the gamma chain. F(1) is attached to F(0) by a central stalk formed by the gamma and epsilon chains, while a peripheral stalk is formed by the delta and b chains.

The protein resides in the cell inner membrane. In terms of biological role, f(1)F(0) ATP synthase produces ATP from ADP in the presence of a proton or sodium gradient. F-type ATPases consist of two structural domains, F(1) containing the extramembraneous catalytic core and F(0) containing the membrane proton channel, linked together by a central stalk and a peripheral stalk. During catalysis, ATP synthesis in the catalytic domain of F(1) is coupled via a rotary mechanism of the central stalk subunits to proton translocation. Component of the F(0) channel, it forms part of the peripheral stalk, linking F(1) to F(0). The polypeptide is ATP synthase subunit b 1 (Azorhizobium caulinodans (strain ATCC 43989 / DSM 5975 / JCM 20966 / LMG 6465 / NBRC 14845 / NCIMB 13405 / ORS 571)).